The primary structure comprises 218 residues: Probable nicotinate-nucleotide adenylyltransferase (218 aa).

This sequence belongs to the NadD family.

The catalysed reaction is nicotinate beta-D-ribonucleotide + ATP + H(+) = deamido-NAD(+) + diphosphate. The protein operates within cofactor biosynthesis; NAD(+) biosynthesis; deamido-NAD(+) from nicotinate D-ribonucleotide: step 1/1. Its function is as follows. Catalyzes the reversible adenylation of nicotinate mononucleotide (NaMN) to nicotinic acid adenine dinucleotide (NaAD). In Acidithiobacillus ferrooxidans (strain ATCC 23270 / DSM 14882 / CIP 104768 / NCIMB 8455) (Ferrobacillus ferrooxidans (strain ATCC 23270)), this protein is Probable nicotinate-nucleotide adenylyltransferase.